A 435-amino-acid polypeptide reads, in one-letter code: GTPase Der (435 aa).

EngA-type G domains are found at residues 2–167 and 178–351; these read ATVV…RESG and PKIA…ESYC. Residues 8–15, 55–59, 118–121, 184–191, 231–235, and 297–300 contribute to the GTP site; these read GRANVGKS, DTCGV, NKSE, GKPNVGKS, DTAGM, and NKFD. The KH-like domain occupies 352–435; it reads RKVPQQLLSK…PLVIEFKSRR (84 aa).

The protein belongs to the TRAFAC class TrmE-Era-EngA-EngB-Septin-like GTPase superfamily. EngA (Der) GTPase family. In terms of assembly, associates with the 50S ribosomal subunit.

Functionally, GTPase that plays an essential role in the late steps of ribosome biogenesis. This is GTPase Der from Pseudothermotoga lettingae (strain ATCC BAA-301 / DSM 14385 / NBRC 107922 / TMO) (Thermotoga lettingae).